Here is a 373-residue protein sequence, read N- to C-terminus: Flagellar P-ring protein (373 aa).

The signal sequence occupies residues 1–30; sequence MTNRWSFDVNKNLVTVLFTWLCLSISTAHA.

This sequence belongs to the FlgI family. As to quaternary structure, the basal body constitutes a major portion of the flagellar organelle and consists of four rings (L,P,S, and M) mounted on a central rod.

The protein localises to the periplasm. The protein resides in the bacterial flagellum basal body. Assembles around the rod to form the L-ring and probably protects the motor/basal body from shearing forces during rotation. The sequence is that of Flagellar P-ring protein from Aliivibrio fischeri (strain ATCC 700601 / ES114) (Vibrio fischeri).